The chain runs to 256 residues: ATP synthase subunit a (256 aa).

A propeptide spans 1 to 7 (removed in mature form); the sequence is MLNLFIT. A run of 6 helical transmembrane segments spans residues 33-53, 92-112, 122-142, 148-168, 188-208, and 209-229; these read FTTFSLYTIIVLFTVLGLNLL, YFPLVYTFFFFIFVSNLISMI, LIFIVSLSSVIWLGATIIGLT, FFSLFVPGGTPLPLVPLLVLI, VLSGHLLLIILGGLLFNLMSM, and SIITFVFGLIPGVGLLAIVVL.

Belongs to the ATPase A chain family. In terms of assembly, F-type ATPases have 2 components, CF(1) - the catalytic core - and CF(0) - the membrane proton channel. CF(1) has five subunits: alpha(3), beta(3), gamma(1), delta(1), epsilon(1). CF(0) has three main subunits: a, b and c.

Its subcellular location is the mitochondrion inner membrane. Functionally, mitochondrial membrane ATP synthase (F(1)F(0) ATP synthase or Complex V) produces ATP from ADP in the presence of a proton gradient across the membrane which is generated by electron transport complexes of the respiratory chain. F-type ATPases consist of two structural domains, F(1) - containing the extramembraneous catalytic core and F(0) - containing the membrane proton channel, linked together by a central stalk and a peripheral stalk. During catalysis, ATP synthesis in the catalytic domain of F(1) is coupled via a rotary mechanism of the central stalk subunits to proton translocation. Key component of the proton channel; it may play a direct role in the translocation of protons across the membrane. The sequence is that of ATP synthase subunit a (ATP6) from Kluyveromyces lactis (strain ATCC 8585 / CBS 2359 / DSM 70799 / NBRC 1267 / NRRL Y-1140 / WM37) (Yeast).